The following is a 144-amino-acid chain: Small ribosomal subunit protein bS6 (144 aa).

The interval 95 to 144 is disordered; it reads PVTTPSPMMQDDKSKPDENSRGTAAPTVNVADDSASGAQVVAAEENDTQS. Basic and acidic residues predominate over residues 104–114; the sequence is QDDKSKPDENS.

The protein belongs to the bacterial ribosomal protein bS6 family.

Its function is as follows. Binds together with bS18 to 16S ribosomal RNA. The protein is Small ribosomal subunit protein bS6 of Nitrosomonas eutropha (strain DSM 101675 / C91 / Nm57).